Here is a 685-residue protein sequence, read N- to C-terminus: Nucleolar protein 4 (685 aa).

Residues 1–21 (MEETIENVEVPSSNVSKQNDD) are disordered. The RRM 1 domain occupies 26-103 (KTLFVRSIPQ…HILRVDIAKR (78 aa)). Residues 106 to 123 (RSKKTSEVVEKSTPESSE) show a composition bias toward basic and acidic residues. The segment at 106-142 (RSKKTSEVVEKSTPESSEKITGQNNEDEDDADGEDSM) is disordered. Residues 130-140 (NEDEDDADGED) show a composition bias toward acidic residues. The region spanning 147–225 (PKLIIRNMPW…RKVAVDFAVQ (79 aa)) is the RRM 2 domain. The span at 231-242 (DYKKAQPEMNDK) shows a compositional bias: basic and acidic residues. The tract at residues 231-285 (DYKKAQPEMNDKDDNESGNEDAEENHDDEEDENEEEDRQVDQASKNKESKRKAQN) is disordered. Residues 243 to 268 (DDNESGNEDAEENHDDEEDENEEEDR) show a composition bias toward acidic residues. The residue at position 247 (serine 247) is a Phosphoserine. RRM domains follow at residues 290–383 (FSVF…PTLV) and 462–612 (TRLA…FAIE). Position 379 is a phosphothreonine (threonine 379). The span at 622–631 (EQLKQARTKR) shows a compositional bias: basic residues. Residues 622 to 685 (EQLKQARTKR…FKRKRKHAKK (64 aa)) are disordered. Residues 645 to 672 (SENKKPKKEEATTPTNPDDKKMGDDIKR) are compositionally biased toward basic and acidic residues. Residues 674 to 685 (IGFKRKRKHAKK) show a composition bias toward basic residues.

Interacts with NOP1.

It localises to the nucleus. The protein localises to the nucleolus. Required for 60S ribosomal subunit synthesis. Probably involved in the processing of 27S rRNA to produce mature 25S rRNA. The chain is Nucleolar protein 4 (NOP4) from Saccharomyces cerevisiae (strain ATCC 204508 / S288c) (Baker's yeast).